Reading from the N-terminus, the 511-residue chain is Bifunctional purine biosynthesis protein PurH (511 aa).

In terms of domain architecture, MGS-like spans 1–147; that stretch reads MIQIKRALIS…KNYKHTLVLT (147 aa).

It belongs to the PurH family.

The catalysed reaction is (6R)-10-formyltetrahydrofolate + 5-amino-1-(5-phospho-beta-D-ribosyl)imidazole-4-carboxamide = 5-formamido-1-(5-phospho-D-ribosyl)imidazole-4-carboxamide + (6S)-5,6,7,8-tetrahydrofolate. It carries out the reaction IMP + H2O = 5-formamido-1-(5-phospho-D-ribosyl)imidazole-4-carboxamide. It participates in purine metabolism; IMP biosynthesis via de novo pathway; 5-formamido-1-(5-phospho-D-ribosyl)imidazole-4-carboxamide from 5-amino-1-(5-phospho-D-ribosyl)imidazole-4-carboxamide (10-formyl THF route): step 1/1. The protein operates within purine metabolism; IMP biosynthesis via de novo pathway; IMP from 5-formamido-1-(5-phospho-D-ribosyl)imidazole-4-carboxamide: step 1/1. The polypeptide is Bifunctional purine biosynthesis protein PurH (Leptospira borgpetersenii serovar Hardjo-bovis (strain JB197)).